The sequence spans 225 residues: UPF0758 protein Bpet3149 (225 aa).

Positions 103 to 225 (AMSEPGSVKR…VVSMAELGLL (123 aa)) constitute an MPN domain. 3 residues coordinate Zn(2+): His-174, His-176, and Asp-187. Positions 174–187 (HNHPSGSAQPSQAD) match the JAMM motif motif.

This sequence belongs to the UPF0758 family.

The sequence is that of UPF0758 protein Bpet3149 from Bordetella petrii (strain ATCC BAA-461 / DSM 12804 / CCUG 43448).